The primary structure comprises 343 residues: GTPase Obg (343 aa).

One can recognise an Obg domain in the interval 2 to 160 (EKFVDRVKIF…RWIILELKLI (159 aa)). The OBG-type G domain occupies 161–332 (ADVGLVGFPN…LKEGLWKKYE (172 aa)). Residues 167–174 (GFPNAGKS), 192–196 (FTTLS), 214–217 (DIPG), 284–287 (NKID), and 313–315 (SAL) contribute to the GTP site. The Mg(2+) site is built by Ser-174 and Thr-194.

It belongs to the TRAFAC class OBG-HflX-like GTPase superfamily. OBG GTPase family. In terms of assembly, monomer. Mg(2+) serves as cofactor.

The protein resides in the cytoplasm. Functionally, an essential GTPase which binds GTP, GDP and possibly (p)ppGpp with moderate affinity, with high nucleotide exchange rates and a fairly low GTP hydrolysis rate. Plays a role in control of the cell cycle, stress response, ribosome biogenesis and in those bacteria that undergo differentiation, in morphogenesis control. The chain is GTPase Obg from Aquifex aeolicus (strain VF5).